A 153-amino-acid chain; its full sequence is Probable inactive ribonuclease-like protein 13 (153 aa).

The first 22 residues, 1–22, serve as a signal peptide directing secretion; that stretch reads MASDAASLLVLQLVLQPTLVTG.

The protein belongs to the pancreatic ribonuclease family.

The protein resides in the secreted. Its function is as follows. Does not exhibit any ribonuclease activity. This is Probable inactive ribonuclease-like protein 13 (Rnase13) from Rattus norvegicus (Rat).